A 50-amino-acid chain; its full sequence is Bacteriocin-like protein SboX (50 aa).

This is Bacteriocin-like protein SboX (sboX) from Bacillus subtilis (strain 168).